The primary structure comprises 1342 residues: MVYSYTEKKRIRKDFGKRPQVLDVPYLLSIQLDSFQKFIEQDPEGQYGLEAAFRSVFPIQSYSGNSELQYVSYRLGEPVFDVKECQIRGVTYSAPLRVKLRLVIYEREAPEGTVKDIKEQEVYMGEIPLMTDNGTFVINGTERVIVSQLHRSPGVFFDSDKGKTHSSGKVLYNARIIPYRGSWLDFEFDPKDNLFVRIDRRRKLPATIILRALDYTTEQILDLFFEKVVFEIRDNKLQMELIPERLRGETASFDIEANGKIYVEKGRRITARHIRQLEKDEIKHIEVPVEYIAGKVAAKDYVDASTGELICPANMELSLDLLAKLSQSGHKRIETLFTNDLDHGPYISETVRVDPTTDRLSALVEIYRMMRPGEPPTREAAESLFENLFFSEDRYDLSAVGRMKFNRSLLRDEIEGSGILSKADIIDVMKKLIDIRNGKGEVDDIDHLGNRRIRSVGEMAENQFRVGLVRVERAVKERLSLGDLDTLMPQDMINAKPISAAVKEFFGSSQLSQFMDQNNPLSEITHKRRISALGPGGLTRERAGFEVRDVHPTHYGRVCPIETPEGPNIGLINSLSVYAQTNEYGFLETPYRKVTDGVVTDEIHYLSAIEEGNYVIAQANTNLTEEGRFADDLVTCRSKGESSLFSADQVDYMDVSTQQVVSVGASLIPFLEHDDANRALMGANMQRQAVPTLRADKPLVGTGMERAVAVDSGVTAVAKRGGIVQYVDASRIVIKVNEDEMYPGEAGIDIYNLTKYTRSNQNTCINQMPCVSLNEPVERGDVLADGPSTDLGELALGQNMRVAFMPWNGYNFEDSILVSERVVQEDRFTTIHIQELACVSRDTKLGPEEITADIPNVGEAALSKLDESGIVYIGAEVTGGDILVGKVTPKGETQLTPEEKLLRAIFGEKASDVKDSSLRVPNGVSGTVIDVQVFTRDGVEKDKRALEIEEMQLKQAKKDLSEELQILEAGLFSRIRAVLIAGGVEAEKLDKLPRDRWLELGLTDEEKQNQLEQLAEQYDELKHEFEKKLEAKRRKITQGDDLAPGVLKIVKVYLAVKRQIQPGDKMAGRHGNKGVISKINPIEDMPYDENGTPVDIVLNPLGVPSRMNIGQILETHLGMAAKGIGDKINAMLKRQEEVAKLREFIQKAYDLGQDVRQKVDLNTFSDDEVLRLAENLRKGMPLATPVFDGAKEAEIKELLQLGDLPTSGQITLFDGRTGEQFERPVTVGYMYMLKLNHLVDDKMHARSTGSYSLVTQQPLGGKAQFGGQRFGEMEVWALEAYGAAYTLQEMLTVKSDDVNGRTKMYKNIVDGNHQMEPGMPESFNVLLKEIRSLGINIELEDE.

It belongs to the RNA polymerase beta chain family. The RNAP catalytic core consists of 2 alpha, 1 beta, 1 beta' and 1 omega subunit. When a sigma factor is associated with the core the holoenzyme is formed, which can initiate transcription.

The enzyme catalyses RNA(n) + a ribonucleoside 5'-triphosphate = RNA(n+1) + diphosphate. Its function is as follows. DNA-dependent RNA polymerase catalyzes the transcription of DNA into RNA using the four ribonucleoside triphosphates as substrates. The chain is DNA-directed RNA polymerase subunit beta from Cronobacter sakazakii (strain ATCC BAA-894) (Enterobacter sakazakii).